Reading from the N-terminus, the 225-residue chain is 2-C-methyl-D-erythritol 4-phosphate cytidylyltransferase (225 aa).

This sequence belongs to the IspD/TarI cytidylyltransferase family. IspD subfamily.

The catalysed reaction is 2-C-methyl-D-erythritol 4-phosphate + CTP + H(+) = 4-CDP-2-C-methyl-D-erythritol + diphosphate. It functions in the pathway isoprenoid biosynthesis; isopentenyl diphosphate biosynthesis via DXP pathway; isopentenyl diphosphate from 1-deoxy-D-xylulose 5-phosphate: step 2/6. In terms of biological role, catalyzes the formation of 4-diphosphocytidyl-2-C-methyl-D-erythritol from CTP and 2-C-methyl-D-erythritol 4-phosphate (MEP). The sequence is that of 2-C-methyl-D-erythritol 4-phosphate cytidylyltransferase from Cereibacter sphaeroides (strain ATCC 17029 / ATH 2.4.9) (Rhodobacter sphaeroides).